The chain runs to 327 residues: S-adenosylmethionine/S-adenosylhomocysteine transporter (327 aa).

Transmembrane regions (helical) follow at residues 22–42 (CDMA…SFAL), 53–73 (LFVT…LLLC), 85–105 (IMPI…LEFI), 114–134 (TACF…YVQL), 143–163 (LGGL…GGSE), 165–185 (VAEW…ATCL), 202–222 (SLSM…LSLI), 240–260 (LFLQ…YNLF), 271–291 (FLSF…WLLL), and 294–314 (SFPP…RLIY). The region spanning 34–157 (FIWSSSFALS…LGLVSYLVYL (124 aa)) is the EamA 1 domain. The 125-residue stretch at 189–313 (GWTLLRKLGR…GFMVLGCRLI (125 aa)) folds into the EamA 2 domain.

The protein belongs to the drug/metabolite transporter (DMT) superfamily. 10 TMS drug/metabolite exporter (DME) (TC 2.A.7.3) family.

The protein localises to the cell membrane. Transports S-adenosylmethionine (SAM) and S-adenosylhomocysteine (SAH). Allows bacteria to acquire SAM from the eukaryotic host cell and to likely remove the toxic by-product SAH. The sequence is that of S-adenosylmethionine/S-adenosylhomocysteine transporter from Chlamydia trachomatis serovar D (strain ATCC VR-885 / DSM 19411 / UW-3/Cx).